We begin with the raw amino-acid sequence, 456 residues long: Adenylosuccinate synthetase isozyme 2 (456 aa).

A disordered region spans residues 1–24 (MAFAETYPAASSLPNGDCGRPRAR). GTP contacts are provided by residues 39-45 (GDEGKGK) and 67-69 (GHT). Catalysis depends on Asp40, which acts as the Proton acceptor. Mg(2+) is bound by residues Asp40 and Gly67. Substrate is bound at residue Asp40. Residues 40–43 (DEGK), 65–68 (NAGH), Thr162, Arg176, Asn255, Thr270, and Arg334 each bind IMP. His68 functions as the Proton donor in the catalytic mechanism. 330 to 336 (VTTGRKR) contacts substrate. Residues Arg336, 362–364 (KLD), and 444–447 (GVGK) each bind GTP.

It belongs to the adenylosuccinate synthetase family. Homodimer. Mg(2+) is required as a cofactor.

Its subcellular location is the cytoplasm. The protein resides in the mitochondrion. It catalyses the reaction IMP + L-aspartate + GTP = N(6)-(1,2-dicarboxyethyl)-AMP + GDP + phosphate + 2 H(+). The protein operates within purine metabolism; AMP biosynthesis via de novo pathway; AMP from IMP: step 1/2. With respect to regulation, inhibited competitively by AMP and IMP and non-competitively by fructose 1,6-bisphosphate. Functionally, plays an important role in the de novo pathway and in the salvage pathway of purine nucleotide biosynthesis. Catalyzes the first committed step in the biosynthesis of AMP from IMP. This Homo sapiens (Human) protein is Adenylosuccinate synthetase isozyme 2.